The following is a 298-amino-acid chain: Riboflavin transporter (298 aa).

Helical transmembrane passes span 8 to 28 (LQGA…NSVA), 35 to 55 (FGLP…VVIL), 79 to 99 (VFLA…PVPI), 101 to 121 (QGIA…GLWL), 125 to 145 (VGMA…IILE), 151 to 171 (FNLA…YSLM), 184 to 204 (MVVY…LPDW), 211 to 231 (TVWL…WAIA), and 258 to 278 (WLVF…IIVL). 2 EamA domains span residues 10-144 (GALW…MIIL) and 156-284 (LLPV…AFIT).

This sequence belongs to the drug/metabolite transporter (DMT) superfamily. 10 TMS drug/metabolite exporter (DME) (TC 2.A.7.3) family.

The protein localises to the cell membrane. Its function is as follows. Transports riboflavin into the cell. The protein is Riboflavin transporter of Vibrio cholerae serotype O1 (strain ATCC 39315 / El Tor Inaba N16961).